A 147-amino-acid chain; its full sequence is Proteinase inhibitor type-2 T (147 aa).

The N-terminal stretch at 1 to 25 is a signal peptide; it reads MAVHKEVSFVAYLLIVLGMFLYVDA. Tandem repeats lie at residues 25 to 82 and 83 to 142. 8 cysteine pairs are disulfide-bonded: Cys-28-Cys-116, Cys-32-Cys-112, Cys-40-Cys-122, Cys-52-Cys-89, Cys-55-Cys-73, Cys-56-Cys-85, Cys-62-Cys-98, and Cys-115-Cys-133.

This sequence belongs to the protease inhibitor I20 (potato type II proteinase inhibitor) family.

Inhibitor of trypsin and chymotrypsin. The polypeptide is Proteinase inhibitor type-2 T (PIN2T) (Solanum tuberosum (Potato)).